The chain runs to 271 residues: Protein ABHD14A (271 aa).

Residues 35-55 (VALLGLSLLLMLLLYVGLPGP) form a helical; Signal-anchor for type II membrane protein membrane-spanning segment. N-linked (GlcNAc...) asparagine glycosylation occurs at Asn67. Ser171 functions as the Charge relay system in the catalytic mechanism. Asn201 carries an N-linked (GlcNAc...) asparagine glycan. Active-site charge relay system residues include Asp222 and His249.

The protein belongs to the AB hydrolase superfamily. ABHD14 family.

The protein resides in the cytoplasm. Its subcellular location is the membrane. In terms of biological role, possible role in granule neuron development. In Homo sapiens (Human), this protein is Protein ABHD14A.